The chain runs to 468 residues: Chromosomal replication initiator protein DnaA (468 aa).

The tract at residues 1-84 is domain I, interacts with DnaA modulators; sequence MSSSLWLQCL…RFEVGSRRVA (84 aa). Residues 84-131 form a domain II region; that stretch reads AAPKPAPTRTPADVAAESSAPAQLQARKPVHKTWDDDAQVIADINHRS. Residues 85-95 show a composition bias toward low complexity; the sequence is APKPAPTRTPA. The segment at 85 to 104 is disordered; sequence APKPAPTRTPADVAAESSAP. Residues 132–348 form a domain III, AAA+ region region; sequence NVNPKHKFNN…GALNRVIANA (217 aa). ATP contacts are provided by glycine 176, glycine 178, lysine 179, and threonine 180. A domain IV, binds dsDNA region spans residues 349–468; that stretch reads NFTGRPITID…YSNLIRTLSS (120 aa).

Belongs to the DnaA family. As to quaternary structure, oligomerizes as a right-handed, spiral filament on DNA at oriC.

It is found in the cytoplasm. Functionally, plays an essential role in the initiation and regulation of chromosomal replication. ATP-DnaA binds to the origin of replication (oriC) to initiate formation of the DNA replication initiation complex once per cell cycle. Binds the DnaA box (a 9 base pair repeat at the origin) and separates the double-stranded (ds)DNA. Forms a right-handed helical filament on oriC DNA; dsDNA binds to the exterior of the filament while single-stranded (ss)DNA is stabiized in the filament's interior. The ATP-DnaA-oriC complex binds and stabilizes one strand of the AT-rich DNA unwinding element (DUE), permitting loading of DNA polymerase. After initiation quickly degrades to an ADP-DnaA complex that is not apt for DNA replication. Binds acidic phospholipids. Complements a temperature-sensitive E.coli mutant, the DnaA consensus is 5'-TT(A/T)TNCACA-3'. This Vibrio harveyi (Beneckea harveyi) protein is Chromosomal replication initiator protein DnaA.